A 487-amino-acid chain; its full sequence is Protein DETOXIFICATION 11 (487 aa).

12 helical membrane passes run L35–I55, F73–L93, L122–G142, A151–L171, L184–Y204, I211–F231, A264–L284, V293–A313, A330–G350, M377–V397, F412–L432, and V435–V455.

It belongs to the multi antimicrobial extrusion (MATE) (TC 2.A.66.1) family.

It localises to the membrane. In Arabidopsis thaliana (Mouse-ear cress), this protein is Protein DETOXIFICATION 11.